Reading from the N-terminus, the 375-residue chain is Probable L-tyrosine/L-aspartate decarboxylase (375 aa).

Lys226 is subject to N6-(pyridoxal phosphate)lysine.

Belongs to the group II decarboxylase family. MfnA subfamily. Pyridoxal 5'-phosphate is required as a cofactor.

It carries out the reaction L-tyrosine + H(+) = tyramine + CO2. The catalysed reaction is L-aspartate + H(+) = beta-alanine + CO2. It participates in cofactor biosynthesis; methanofuran biosynthesis. Its pathway is cofactor biosynthesis; coenzyme A biosynthesis. Its function is as follows. Catalyzes the decarboxylation of L-tyrosine to produce tyramine for methanofuran biosynthesis. Can also catalyze the decarboxylation of L-aspartate to produce beta-alanine for coenzyme A (CoA) biosynthesis. The sequence is that of Probable L-tyrosine/L-aspartate decarboxylase from Methanocella arvoryzae (strain DSM 22066 / NBRC 105507 / MRE50).